The sequence spans 510 residues: Ribonuclease Y (510 aa).

Residues 2–22 (IYIIFSSIFAGFILGFLVRVF) traverse the membrane as a helical segment. In terms of domain architecture, KH spans 198 to 258 (TVASVELPND…IRKELAKRTL (61 aa)). The HD domain maps to 324–419 (VLSHSKETAI…VQIADAISAS (96 aa)).

This sequence belongs to the RNase Y family.

It is found in the cell membrane. Endoribonuclease that initiates mRNA decay. The chain is Ribonuclease Y from Borreliella burgdorferi (strain ATCC 35210 / DSM 4680 / CIP 102532 / B31) (Borrelia burgdorferi).